Consider the following 147-residue polypeptide: Hemoglobin subunit gamma-1 (147 aa).

Glycine 2 bears the N-acetylglycine mark. In terms of domain architecture, Globin spans 3–147; the sequence is HFTEEDKATI…VASALSSRYH (145 aa). Threonine 13 is subject to Phosphothreonine. 3 positions are modified to phosphoserine: serine 45, serine 51, and serine 53. Lysine 60 carries the N6-acetyllysine modification. Histidine 64 is a heme b binding site. Residue lysine 83 is modified to N6-acetyllysine. Histidine 93 lines the heme b pocket. S-nitrosocysteine is present on cysteine 94. Position 140 is a phosphoserine (serine 140).

It belongs to the globin family. Heterotetramer of two alpha chains and two gamma chains in fetal hemoglobin (Hb F). Red blood cells.

Its function is as follows. Gamma chains make up the fetal hemoglobin F, in combination with alpha chains. The protein is Hemoglobin subunit gamma-1 (HBG1) of Gorilla gorilla gorilla (Western lowland gorilla).